Consider the following 530-residue polypeptide: NAD(+) kinase (530 aa).

Disordered stretches follow at residues M1–N27, I57–N99, and S486–V530. Residues W13 to N25 are compositionally biased toward basic and acidic residues. A compositionally biased stretch (low complexity) spans S59–L75. The span at I88 to N99 shows a compositional bias: polar residues. 2 positions are modified to phosphoserine: S499 and S503. Acidic residues predominate over residues S499 to V508.

It belongs to the NAD kinase family. As to quaternary structure, homohexamer.

It carries out the reaction NAD(+) + ATP = ADP + NADP(+) + H(+). In terms of biological role, specifically phosphorylates NAD in the presence of ATP, dATP, or CTP as phosphoryl donors. The chain is NAD(+) kinase (UTR1) from Saccharomyces cerevisiae (strain ATCC 204508 / S288c) (Baker's yeast).